Here is a 173-residue protein sequence, read N- to C-terminus: Adenine phosphoribosyltransferase (173 aa).

The protein belongs to the purine/pyrimidine phosphoribosyltransferase family. As to quaternary structure, homodimer.

Its subcellular location is the cytoplasm. The catalysed reaction is AMP + diphosphate = 5-phospho-alpha-D-ribose 1-diphosphate + adenine. Its pathway is purine metabolism; AMP biosynthesis via salvage pathway; AMP from adenine: step 1/1. Its function is as follows. Catalyzes a salvage reaction resulting in the formation of AMP, that is energically less costly than de novo synthesis. The chain is Adenine phosphoribosyltransferase from Thermotoga maritima (strain ATCC 43589 / DSM 3109 / JCM 10099 / NBRC 100826 / MSB8).